The following is a 77-amino-acid chain: RNA-binding protein Hfq (77 aa).

Positions 9-69 constitute a Sm domain; sequence DQFLNQLRKE…ISTFAPQKNV (61 aa).

It belongs to the Hfq family. As to quaternary structure, homohexamer.

Functionally, RNA chaperone that binds small regulatory RNA (sRNAs) and mRNAs to facilitate mRNA translational regulation in response to envelope stress, environmental stress and changes in metabolite concentrations. Also binds with high specificity to tRNAs. The polypeptide is RNA-binding protein Hfq (Shouchella clausii (strain KSM-K16) (Alkalihalobacillus clausii)).